The chain runs to 165 residues: Large ribosomal subunit protein uL15 (165 aa).

The disordered stretch occupies residues 1–44 (MSLNQLKAPRGANRAKKRVGRGQGSGLGKTAGRGGKGQKARSGN). Residues 21–37 (RGQGSGLGKTAGRGGKG) show a composition bias toward gly residues.

The protein belongs to the universal ribosomal protein uL15 family. Part of the 50S ribosomal subunit.

In terms of biological role, binds to the 23S rRNA. This is Large ribosomal subunit protein uL15 from Anaeromyxobacter dehalogenans (strain 2CP-1 / ATCC BAA-258).